We begin with the raw amino-acid sequence, 753 residues long: 5-methyltetrahydropteroyltriglutamate--homocysteine methyltransferase (753 aa).

Residues arginine 17–lysine 20 and lysine 117 each bind 5-methyltetrahydropteroyltri-L-glutamate. Residues isoleucine 431–serine 433 and glutamate 484 each bind L-homocysteine. Residues isoleucine 431 to serine 433 and glutamate 484 each bind L-methionine. Residues arginine 515 to cysteine 516 and tryptophan 561 each bind 5-methyltetrahydropteroyltri-L-glutamate. Aspartate 599 contributes to the L-homocysteine binding site. L-methionine is bound at residue aspartate 599. Glutamate 605 serves as a coordination point for 5-methyltetrahydropteroyltri-L-glutamate. Zn(2+)-binding residues include histidine 641, cysteine 643, and glutamate 665. Catalysis depends on histidine 694, which acts as the Proton donor. A Zn(2+)-binding site is contributed by cysteine 726.

It belongs to the vitamin-B12 independent methionine synthase family. The cofactor is Zn(2+).

It catalyses the reaction 5-methyltetrahydropteroyltri-L-glutamate + L-homocysteine = tetrahydropteroyltri-L-glutamate + L-methionine. It functions in the pathway amino-acid biosynthesis; L-methionine biosynthesis via de novo pathway; L-methionine from L-homocysteine (MetE route): step 1/1. Its function is as follows. Catalyzes the transfer of a methyl group from 5-methyltetrahydrofolate to homocysteine resulting in methionine formation. The protein is 5-methyltetrahydropteroyltriglutamate--homocysteine methyltransferase of Escherichia coli O6:K15:H31 (strain 536 / UPEC).